The sequence spans 723 residues: MLSSMAAAGSVKAALQVAEVLEAIVSCCVGPEGRQVLCTKPTGEVLLSRNGGRLLEALHLEHPIARMIVDCVSSHLKKTGDGAKTFIIFLCHLLRGLHAITDREKDPLMCENIQTHGRHWKNCSRWKFISQALLTFQTQILDGIMDQYLSRHFLSIFSSAKERTLCRSSLELLLEAYFCGRVGRNNHKFISQLMCDYFFKCMTCKSGIGVFELVDDHFVELNVGVTGLPVSDSRIIAGLVLQKDFSVYRPADGDMRMVIVTETIQPLFSTSGSEFILNSEAQFQTSQFWIMEKTKAIMKHLHSQNVKLLISSVKQPDLVSYYAGVNGISVVECLSSEEVSLIRRIIGLSPFVPPQAFSQCEIPNTALVKFCKPLILRSKRYVHLGLISTCAFIPHSIVLCGPVHGLIEQHEDALHGALKMLRQLFKDLDLNYMTQTNDQNGTSSLFIYKNSGESYQAPDPGNGSIQRPYQDTVAENKDALEKTQTYLKVHSNLVIPDVELETYIPYSTPTLTPTDTFQTVETLTCLSLERNRLTDYYEPLLKNNSTAYSTRGNRIEISYENLQVTNITRKGSMLPVSCKLPNMGTSQSYLSSSMPAGCVLPVGGNFEILLHYYLLNYAKKCHQSEETMVSMIIANALLGIPKVLYKSKTGKYSFPHTYIRAVHALQTNQPLVSSQTGLESVMGKYQLLTSVLQCLTKILTIDMVITVKRHPQKVHNQDSEDEL.

Belongs to the TCP-1 chaperonin family. As to quaternary structure, component of a complex composed at least of MKKS, BBS10, BBS12, TCP1, CCT2, CCT3, CCT4, CCT5 and CCT8.

The protein resides in the cell projection. The protein localises to the cilium. Probable molecular chaperone that assists the folding of proteins upon ATP hydrolysis. Plays a role in the assembly of BBSome, a complex involved in ciliogenesis regulating transports vesicles to the cilia. Involved in adipogenic differentiation. The polypeptide is BBSome complex assembly protein BBS10 (BBS10) (Homo sapiens (Human)).